A 287-amino-acid chain; its full sequence is Elongation factor Ts (287 aa).

Positions 80–83 are involved in Mg(2+) ion dislocation from EF-Tu; that stretch reads TDFL.

The protein belongs to the EF-Ts family.

The protein resides in the cytoplasm. Associates with the EF-Tu.GDP complex and induces the exchange of GDP to GTP. It remains bound to the aminoacyl-tRNA.EF-Tu.GTP complex up to the GTP hydrolysis stage on the ribosome. This chain is Elongation factor Ts, found in Pseudomonas syringae pv. syringae (strain B728a).